Here is a 286-residue protein sequence, read N- to C-terminus: Protein NipSnap homolog 2 (286 aa).

Residues 1 to 40 constitute a mitochondrion transit peptide; that stretch reads MATRVLHSSCSGLYRAAGPARGKGHATAVIRSLSASHNRP.

The protein belongs to the NipSnap family.

It localises to the mitochondrion matrix. Its function is as follows. Protein involved in mitophagy. Accumulates on the mitochondria surface in response to mitochondrial depolarization and acts as a 'eat me' signal by recruiting proteins involved in selective autophagy. In Danio rerio (Zebrafish), this protein is Protein NipSnap homolog 2 (nipsnap2).